The following is a 486-amino-acid chain: UDP-N-acetylmuramoyl-L-alanyl-D-glutamate--2,6-diaminopimelate ligase (486 aa).

S30 is a binding site for UDP-N-acetyl-alpha-D-muramoyl-L-alanyl-D-glutamate. G111–T117 serves as a coordination point for ATP. UDP-N-acetyl-alpha-D-muramoyl-L-alanyl-D-glutamate contacts are provided by residues T153–T154, S180, Q186, and R188. At K220 the chain carries N6-carboxylysine. Residues R378, D402–R405, G455, and E459 each bind meso-2,6-diaminopimelate. A Meso-diaminopimelate recognition motif motif is present at residues D402–R405.

This sequence belongs to the MurCDEF family. MurE subfamily. The cofactor is Mg(2+). In terms of processing, carboxylation is probably crucial for Mg(2+) binding and, consequently, for the gamma-phosphate positioning of ATP.

It is found in the cytoplasm. It catalyses the reaction UDP-N-acetyl-alpha-D-muramoyl-L-alanyl-D-glutamate + meso-2,6-diaminopimelate + ATP = UDP-N-acetyl-alpha-D-muramoyl-L-alanyl-gamma-D-glutamyl-meso-2,6-diaminopimelate + ADP + phosphate + H(+). It functions in the pathway cell wall biogenesis; peptidoglycan biosynthesis. Its function is as follows. Catalyzes the addition of meso-diaminopimelic acid to the nucleotide precursor UDP-N-acetylmuramoyl-L-alanyl-D-glutamate (UMAG) in the biosynthesis of bacterial cell-wall peptidoglycan. This is UDP-N-acetylmuramoyl-L-alanyl-D-glutamate--2,6-diaminopimelate ligase from Parabacteroides distasonis (strain ATCC 8503 / DSM 20701 / CIP 104284 / JCM 5825 / NCTC 11152).